The primary structure comprises 277 residues: MLPAKFKTPSQKSLNRRMASIPDGLVRRCPVCHTTFLTDHWEPTRLCPACGYGFRLTAMQRIKLTMDTFQETNAQLTVPDRYTDAAYQAKVARGRQLTGLNESVLTGFGTIDHQSTAIGVMDAFFVMGSLGTATGEKITRLFDEATAKRLPVILFTASGGARMQEGIHSLMQMAKVSAAVARHSQAGLLYIVVLCDPTTGGVTASFAMQGDLILAEPHALVGFAGRRVIEQTIHQTPPADFQRAETVLQHGFIDAIVARPQLKQRLADLLRLHKGES.

In terms of domain architecture, CoA carboxyltransferase N-terminal spans 25–277 (LVRRCPVCHT…DLLRLHKGES (253 aa)). Cys29, Cys32, Cys47, and Cys50 together coordinate Zn(2+). The segment at 29-50 (CPVCHTTFLTDHWEPTRLCPAC) adopts a C4-type zinc-finger fold.

The protein belongs to the AccD/PCCB family. In terms of assembly, acetyl-CoA carboxylase is a heterohexamer composed of biotin carboxyl carrier protein (AccB), biotin carboxylase (AccC) and two subunits each of ACCase subunit alpha (AccA) and ACCase subunit beta (AccD). It depends on Zn(2+) as a cofactor.

It localises to the cytoplasm. It carries out the reaction N(6)-carboxybiotinyl-L-lysyl-[protein] + acetyl-CoA = N(6)-biotinyl-L-lysyl-[protein] + malonyl-CoA. Its pathway is lipid metabolism; malonyl-CoA biosynthesis; malonyl-CoA from acetyl-CoA: step 1/1. Component of the acetyl coenzyme A carboxylase (ACC) complex. Biotin carboxylase (BC) catalyzes the carboxylation of biotin on its carrier protein (BCCP) and then the CO(2) group is transferred by the transcarboxylase to acetyl-CoA to form malonyl-CoA. The sequence is that of Acetyl-coenzyme A carboxylase carboxyl transferase subunit beta from Levilactobacillus brevis (strain ATCC 367 / BCRC 12310 / CIP 105137 / JCM 1170 / LMG 11437 / NCIMB 947 / NCTC 947) (Lactobacillus brevis).